The sequence spans 137 residues: MRTLWIMAVLLVGVEGSLFELGKMILQETGKNPAKSYGAYGCNCGVLGRGKPKDATDRCCYVHKCCYKKLTGCDPKKDRYSYSWKDKTIVCGENNPCLKELCECDKAVAICLRENLGTYNKKYRYHLKPFCKKADPC.

The signal sequence occupies residues 1 to 16 (MRTLWIMAVLLVGVEG). Disulfide bonds link Cys-42–Cys-131, Cys-44–Cys-60, Cys-59–Cys-111, Cys-65–Cys-137, Cys-66–Cys-104, Cys-73–Cys-97, and Cys-91–Cys-102. Positions 121-133 (KKYRYHLKPFCKK) are important for membrane-damaging activities in eukaryotes and bacteria; heparin-binding.

It belongs to the phospholipase A2 family. Group II subfamily. K49 sub-subfamily. As to quaternary structure, homodimer; non-covalently linked (probable alternative/compact dimer conformation in solution). Binds to heparin. As to expression, expressed by the venom gland.

It localises to the secreted. Its activity is regulated as follows. Suramin inhibits both myotoxic and muscle-paralyzing activities. Chicoric acid inhibits myotoxic activity. Zinc ions inhibits the myotoxic activity and the neuromuscular blockade. Heparin inhibits myotoxic activity. Snake venom phospholipase A2 homolog that lacks enzymatic activity. Shows local myotoxic activity. Induces inflammation, since it induces edema and leukocytes infiltration. In addition, it induces NLRP3 NLRP3, ASC (PYCARD), caspase-1 (CASP1), and IL-1beta (IL1B) gene expression in the gastrocnemius muscle, showing that it is able to activate NLRP3 inflammasome. It also damages artificial and myoblast membranes by a calcium-independent mechanism, has bactericidal activity, and induces neuromuscular blockade. A model of myotoxic mechanism has been proposed: an apo Lys49-PLA2 is activated by the entrance of a hydrophobic molecule (e.g. fatty acid) at the hydrophobic channel of the protein leading to a reorientation of a monomer. This reorientation causes a transition between 'inactive' to 'active' states, causing alignment of C-terminal and membrane-docking sites (MDoS) side-by-side and putting the membrane-disruption sites (MDiS) in the same plane, exposed to solvent and in a symmetric position for both monomers. The MDoS region stabilizes the toxin on membrane by the interaction of charged residues with phospholipid head groups. Subsequently, the MDiS region destabilizes the membrane with penetration of hydrophobic residues. This insertion causes a disorganization of the membrane, allowing an uncontrolled influx of ions (i.e. calcium and sodium), and eventually triggering irreversible intracellular alterations and cell death. The sequence is that of Basic phospholipase A2 homolog bothropstoxin-I from Bothrops jararacussu (Jararacussu).